The chain runs to 352 residues: Anthranilate phosphoribosyltransferase (352 aa).

5-phospho-alpha-D-ribose 1-diphosphate is bound by residues Gly-96, 99 to 100 (GS), Ser-104, 106 to 109 (NIST), 124 to 132 (KHGNRSVSS), and Ser-136. Gly-96 is an anthranilate binding site. Position 108 (Ser-108) interacts with Mg(2+). Asn-127 lines the anthranilate pocket. Anthranilate is bound at residue Arg-182. The Mg(2+) site is built by Asp-241 and Glu-242.

Belongs to the anthranilate phosphoribosyltransferase family. As to quaternary structure, homodimer. Mg(2+) is required as a cofactor.

The enzyme catalyses N-(5-phospho-beta-D-ribosyl)anthranilate + diphosphate = 5-phospho-alpha-D-ribose 1-diphosphate + anthranilate. The protein operates within amino-acid biosynthesis; L-tryptophan biosynthesis; L-tryptophan from chorismate: step 2/5. Catalyzes the transfer of the phosphoribosyl group of 5-phosphorylribose-1-pyrophosphate (PRPP) to anthranilate to yield N-(5'-phosphoribosyl)-anthranilate (PRA). The chain is Anthranilate phosphoribosyltransferase from Syntrophotalea carbinolica (strain DSM 2380 / NBRC 103641 / GraBd1) (Pelobacter carbinolicus).